A 140-amino-acid polypeptide reads, in one-letter code: 3-hydroxyacyl-[acyl-carrier-protein] dehydratase FabZ (140 aa).

His47 is an active-site residue.

This sequence belongs to the thioester dehydratase family. FabZ subfamily.

It localises to the cytoplasm. The enzyme catalyses a (3R)-hydroxyacyl-[ACP] = a (2E)-enoyl-[ACP] + H2O. Functionally, involved in unsaturated fatty acids biosynthesis. Catalyzes the dehydration of short chain beta-hydroxyacyl-ACPs and long chain saturated and unsaturated beta-hydroxyacyl-ACPs. The sequence is that of 3-hydroxyacyl-[acyl-carrier-protein] dehydratase FabZ from Streptococcus mutans serotype c (strain ATCC 700610 / UA159).